The primary structure comprises 382 residues: S-adenosylmethionine synthase (382 aa).

His-15 lines the ATP pocket. Asp-17 serves as a coordination point for Mg(2+). Glu-43 contributes to the K(+) binding site. 2 residues coordinate L-methionine: Glu-56 and Gln-99. The interval 99–109 is flexible loop; it reads QSPDINQGVDR. ATP is bound by residues 164–166, 230–231, Asp-239, 245–246, Ala-262, and Lys-266; these read DAK, RF, and RK. Asp-239 provides a ligand contact to L-methionine. An L-methionine-binding site is contributed by Lys-270.

It belongs to the AdoMet synthase family. As to quaternary structure, homotetramer; dimer of dimers. Requires Mg(2+) as cofactor. It depends on K(+) as a cofactor.

The protein resides in the cytoplasm. It catalyses the reaction L-methionine + ATP + H2O = S-adenosyl-L-methionine + phosphate + diphosphate. The protein operates within amino-acid biosynthesis; S-adenosyl-L-methionine biosynthesis; S-adenosyl-L-methionine from L-methionine: step 1/1. Functionally, catalyzes the formation of S-adenosylmethionine (AdoMet) from methionine and ATP. The overall synthetic reaction is composed of two sequential steps, AdoMet formation and the subsequent tripolyphosphate hydrolysis which occurs prior to release of AdoMet from the enzyme. This is S-adenosylmethionine synthase from Glaesserella parasuis serovar 5 (strain SH0165) (Haemophilus parasuis).